The chain runs to 197 residues: Ribosome maturation factor RimP (197 aa).

It belongs to the RimP family.

It localises to the cytoplasm. In terms of biological role, required for maturation of 30S ribosomal subunits. The protein is Ribosome maturation factor RimP of Acidovorax sp. (strain JS42).